Reading from the N-terminus, the 520-residue chain is MATVREKAVSLNLCATYSPAQRPPGPNGSHRPFRATYIWSSIIQALTQVEVKKRRHHLKYHHDCFIGSEAVDVVFAHLVQHKYFGDTEIPRSKVVRVCQALMDCKVFEPIVTACMFGREKKRTVFEDSSCSLYRFINNSSHLGAQVEKSNGRCTPQRPKHSSFQSAPLKSPSLEDLWDNLSLTAADPTHINLTANLPPKVVGEVWQEQTIRRLLQLVDLPLLDSLLEYTPVAPRIPQVKEEELNLTSNYLDREILKAFSDAQADEWVSAAVDCLDFLPDHMVVDVSRNLPEQQAPDSKWKLLLFDTIGKHYQNRSPLLRNQLFDIHTGIAELLVNGKNEPALEATQLCLKLLDSPSREEFRRLLYFMALAADPSEFRLHEETDNRMTVKRMFSRAVVCNKNLSKGKCDLLVLFILDHHKDVFKIPGSLHKMVSDKLVAIQQGSDPDRDTGYTFCQRVDKREFDSATQNNTRTELCALLKTIYENTSLSPKEKKRLLGQFYKSHPETFIQYFGDRVSSVYT.

A DEP domain is found at 45–137 (ALTQVEVKKR…SSCSLYRFIN (93 aa)). The segment at 148 to 167 (KSNGRCTPQRPKHSSFQSAP) is disordered.

The protein belongs to the DEPDC7 family.

The polypeptide is DEP domain-containing protein 7 (depdc7) (Xenopus tropicalis (Western clawed frog)).